Here is a 457-residue protein sequence, read N- to C-terminus: ATP synthase subunit beta (457 aa).

147–154 (GGAGVGKT) contacts ATP.

It belongs to the ATPase alpha/beta chains family. F-type ATPases have 2 components, CF(1) - the catalytic core - and CF(0) - the membrane proton channel. CF(1) has five subunits: alpha(3), beta(3), gamma(1), delta(1), epsilon(1). CF(0) has three main subunits: a(1), b(2) and c(9-12). The alpha and beta chains form an alternating ring which encloses part of the gamma chain. CF(1) is attached to CF(0) by a central stalk formed by the gamma and epsilon chains, while a peripheral stalk is formed by the delta and b chains.

The protein localises to the cell inner membrane. The enzyme catalyses ATP + H2O + 4 H(+)(in) = ADP + phosphate + 5 H(+)(out). Its function is as follows. Produces ATP from ADP in the presence of a proton gradient across the membrane. The catalytic sites are hosted primarily by the beta subunits. This Glaesserella parasuis serovar 5 (strain SH0165) (Haemophilus parasuis) protein is ATP synthase subunit beta.